The sequence spans 962 residues: Insulin-degrading enzyme homolog (962 aa).

The segment covering 1–10 has biased composition (low complexity); that stretch reads MVANEQQQQQ. A disordered region spans residues 1–21; it reads MVANEQQQQQQEEERKEVKLI. Histidine 74 contributes to the Zn(2+) binding site. Catalysis depends on glutamate 77, which acts as the Proton acceptor. Histidine 78 and glutamate 155 together coordinate Zn(2+).

Belongs to the peptidase M16 family. As to quaternary structure, homodimer. Requires Zn(2+) as cofactor.

The protein localises to the cytoplasm. This Dictyostelium discoideum (Social amoeba) protein is Insulin-degrading enzyme homolog.